The primary structure comprises 485 residues: Ribosomal protein uS12 methylthiotransferase RimO (485 aa).

Positions 14–124 (PKVGFISLGC…VMAHVRELLP (111 aa)) constitute an MTTase N-terminal domain. 6 residues coordinate [4Fe-4S] cluster: Cys-23, Cys-59, Cys-88, Cys-167, Cys-171, and Cys-174. One can recognise a Radical SAM core domain in the interval 153 to 389 (LTPRHYAYVK…MEVAQRISRE (237 aa)). In terms of domain architecture, TRAM spans 392 to 468 (AEKVGRVLDV…EYDLYGEVIH (77 aa)).

This sequence belongs to the methylthiotransferase family. RimO subfamily. [4Fe-4S] cluster is required as a cofactor.

The protein resides in the cytoplasm. It catalyses the reaction L-aspartate(89)-[ribosomal protein uS12]-hydrogen + (sulfur carrier)-SH + AH2 + 2 S-adenosyl-L-methionine = 3-methylsulfanyl-L-aspartate(89)-[ribosomal protein uS12]-hydrogen + (sulfur carrier)-H + 5'-deoxyadenosine + L-methionine + A + S-adenosyl-L-homocysteine + 2 H(+). Catalyzes the methylthiolation of an aspartic acid residue of ribosomal protein uS12. The chain is Ribosomal protein uS12 methylthiotransferase RimO from Deinococcus geothermalis (strain DSM 11300 / CIP 105573 / AG-3a).